Reading from the N-terminus, the 225-residue chain is Ribonuclease 3 (225 aa).

The 123-residue stretch at 5–127 (MNKLTSKLGY…IIGAIYLDSD (123 aa)) folds into the RNase III domain. A Mg(2+)-binding site is contributed by E40. The active site involves D44. Residues D113 and E116 each contribute to the Mg(2+) site. The active site involves E116. The DRBM domain maps to 154-224 (DPKTRLQEFL…AETALEQLTN (71 aa)).

The protein belongs to the ribonuclease III family. As to quaternary structure, homodimer. Mg(2+) serves as cofactor.

It localises to the cytoplasm. The enzyme catalyses Endonucleolytic cleavage to 5'-phosphomonoester.. Its function is as follows. Digests double-stranded RNA. Involved in the processing of primary rRNA transcript to yield the immediate precursors to the large and small rRNAs (23S and 16S). Processes some mRNAs, and tRNAs when they are encoded in the rRNA operon. Processes pre-crRNA and tracrRNA of type II CRISPR loci if present in the organism. The polypeptide is Ribonuclease 3 (Vibrio cholerae serotype O1 (strain ATCC 39315 / El Tor Inaba N16961)).